The primary structure comprises 308 residues: B3 domain-containing protein REM23 (308 aa).

The TF-B3 1 DNA-binding region spans 19 to 114 (FFKVLKRSDM…SFTVKIFNKD (96 aa)). The tract at residues 117-198 (EMMQPPQSRA…TERTQNSKRT (82 aa)) is disordered. Over residues 121–133 (PPQSRASFASSSR) the composition is skewed to polar residues. Positions 134–145 (VKTEQDVKREEE) are enriched in basic and acidic residues. The segment covering 149-166 (SSDSRSRGPTTAAETNRG) has biased composition (polar residues). Positions 168 to 177 (SYKRKLNFGK) are enriched in basic residues. Residues 178–198 (KKAEETQTYKRTERTQNSKRT) are compositionally biased toward basic and acidic residues. Positions 216–308 (VAGFKIFISK…LELLLVVSKP (93 aa)) form a DNA-binding region, TF-B3 2.

The protein localises to the nucleus. The protein is B3 domain-containing protein REM23 (REM23) of Arabidopsis thaliana (Mouse-ear cress).